The primary structure comprises 343 residues: MENAYSKAGVNVEAGYEVVERIQKHSQKTQRTGTLGMLGGFGGCFDLSSYKLKEPVLVSGTDGVGTKLLLAIEEQKHETIGIDCVAMCVNDVVAQGAEPLYFLDYLALGTVNPAKVEAIVAGVAAGCCEANAALIGGETAEMPDMYEADAYDVAGFAVGIAEKSQLLTPSNVKEGDFLIGLPSSGLHSNGYSLVRNIFFKKHSFKTTDKLPELAPKTLGEELLTPTKIYVKELLPLLKAGLVHGAAHITGGGFLENLPRMFSSALAAEIQLNSWPVLPIFKLIQKYGEIPPEEMYEIFNMGLGMILAVSPEHVEKVQELLPEAFEIGRLVPRKTKAVIFKEAL.

This sequence belongs to the AIR synthase family.

It is found in the cytoplasm. It catalyses the reaction 2-formamido-N(1)-(5-O-phospho-beta-D-ribosyl)acetamidine + ATP = 5-amino-1-(5-phospho-beta-D-ribosyl)imidazole + ADP + phosphate + H(+). The protein operates within purine metabolism; IMP biosynthesis via de novo pathway; 5-amino-1-(5-phospho-D-ribosyl)imidazole from N(2)-formyl-N(1)-(5-phospho-D-ribosyl)glycinamide: step 2/2. The sequence is that of Phosphoribosylformylglycinamidine cyclo-ligase from Enterococcus faecalis (strain ATCC 700802 / V583).